A 291-amino-acid chain; its full sequence is Probable protein S-acyltransferase 12 (291 aa).

The next 2 helical transmembrane spans lie at 14 to 34 and 49 to 69; these read GYFMILLVVAVVGVSYYAVVV and LSALAALIIFVFHFLLIMLLW. The DHHC domain maps to 111–161; it reads GYCTKCRNVKPPRCHHCSVCQRCVLKMDHHCVWIVNCVGARNYKFFLLFLF. Cys141 functions as the S-palmitoyl cysteine intermediate in the catalytic mechanism. Helical transmembrane passes span 155-175 and 198-218; these read FFLLFLFYTFLETMLDVIVLL and LVLAFVLNFAFVLSLLCFVVM.

The protein belongs to the DHHC palmitoyltransferase family.

The protein resides in the cell membrane. The catalysed reaction is L-cysteinyl-[protein] + hexadecanoyl-CoA = S-hexadecanoyl-L-cysteinyl-[protein] + CoA. Palmitoyl acyltransferase. This Arabidopsis thaliana (Mouse-ear cress) protein is Probable protein S-acyltransferase 12 (PAT12).